Consider the following 689-residue polypeptide: Methionine--tRNA ligase (689 aa).

The 'HIGH' region motif lies at 13 to 23; that stretch reads PYANGNFHIGH. Zn(2+)-binding residues include Cys-144, Cys-147, Cys-157, and Cys-160. Positions 341-345 match the 'KMSKS' region motif; it reads KMSKS. An ATP-binding site is contributed by Lys-344. The 107-residue stretch at 583–689 folds into the tRNA-binding domain; it reads DFAKVDLRIA…PGASPGLRVR (107 aa).

Belongs to the class-I aminoacyl-tRNA synthetase family. MetG type 1 subfamily. Homodimer. It depends on Zn(2+) as a cofactor.

It localises to the cytoplasm. It carries out the reaction tRNA(Met) + L-methionine + ATP = L-methionyl-tRNA(Met) + AMP + diphosphate. Functionally, is required not only for elongation of protein synthesis but also for the initiation of all mRNA translation through initiator tRNA(fMet) aminoacylation. This chain is Methionine--tRNA ligase, found in Polaromonas sp. (strain JS666 / ATCC BAA-500).